The primary structure comprises 563 residues: GTPase Obg (563 aa).

The region spanning 2–168 (SDFVDRVTVH…RDVILELKSI (167 aa)) is the Obg domain. The OBG-type G domain maps to 169–349 (ADVALVGFPS…LNFALSALVH (181 aa)). Residues 175 to 182 (GFPSAGKS), 200 to 204 (FTTLV), 221 to 224 (DVPG), 301 to 304 (NKID), and 330 to 332 (STA) contribute to the GTP site. Residues S182 and T202 each contribute to the Mg(2+) site. An OCT domain is found at 383 to 469 (DEGGSALEFT…ARMVEFDWDP (87 aa)). The interval 529–563 (RKAGHWADPTVDDDRHDETSLFGHGESSEDGETEE) is disordered.

This sequence belongs to the TRAFAC class OBG-HflX-like GTPase superfamily. OBG GTPase family. In terms of assembly, monomer. The cofactor is Mg(2+).

It is found in the cytoplasm. Its function is as follows. An essential GTPase which binds GTP, GDP and possibly (p)ppGpp with moderate affinity, with high nucleotide exchange rates and a fairly low GTP hydrolysis rate. Plays a role in control of the cell cycle, stress response, ribosome biogenesis and in those bacteria that undergo differentiation, in morphogenesis control. The polypeptide is GTPase Obg (Bifidobacterium longum (strain DJO10A)).